A 141-amino-acid polypeptide reads, in one-letter code: Protein C19orf12 (141 aa).

A helical transmembrane segment spans residues 40-60 (FVGGLVGGPPGLAVGGAVGGL).

Belongs to the C19orf12 family.

Its subcellular location is the mitochondrion. It localises to the mitochondrion membrane. It is found in the endoplasmic reticulum. The protein localises to the cytoplasm. The protein resides in the cytosol. This Homo sapiens (Human) protein is Protein C19orf12 (C19orf12).